A 331-amino-acid polypeptide reads, in one-letter code: L-lactate dehydrogenase A chain (331 aa).

NAD(+) is bound by residues G29–K57 and R98. Substrate is bound by residues R105, N137, and R168. Residue N137 participates in NAD(+) binding. H192 acts as the Proton acceptor in catalysis. Substrate is bound at residue T247.

It belongs to the LDH/MDH superfamily. LDH family. As to quaternary structure, homotetramer.

It is found in the cytoplasm. It carries out the reaction (S)-lactate + NAD(+) = pyruvate + NADH + H(+). It functions in the pathway fermentation; pyruvate fermentation to lactate; (S)-lactate from pyruvate: step 1/1. Functionally, interconverts simultaneously and stereospecifically pyruvate and lactate with concomitant interconversion of NADH and NAD(+). This chain is L-lactate dehydrogenase A chain (ldha), found in Harpagifer antarcticus (Antarctic spiny plunderfish).